Consider the following 327-residue polypeptide: Beta-ketoacyl-[acyl-carrier-protein] synthase III 2 (327 aa).

Residues cysteine 114 and histidine 251 contribute to the active site. The interval serine 252–arginine 256 is ACP-binding. Residue asparagine 281 is part of the active site.

This sequence belongs to the thiolase-like superfamily. FabH family. As to quaternary structure, homodimer.

The protein localises to the cytoplasm. The enzyme catalyses malonyl-[ACP] + acetyl-CoA + H(+) = 3-oxobutanoyl-[ACP] + CO2 + CoA. It participates in lipid metabolism; fatty acid biosynthesis. Catalyzes the condensation reaction of fatty acid synthesis by the addition to an acyl acceptor of two carbons from malonyl-ACP. Catalyzes the first condensation reaction which initiates fatty acid synthesis and may therefore play a role in governing the total rate of fatty acid production. Possesses both acetoacetyl-ACP synthase and acetyl transacylase activities. Its substrate specificity determines the biosynthesis of branched-chain and/or straight-chain of fatty acids. The polypeptide is Beta-ketoacyl-[acyl-carrier-protein] synthase III 2 (Bacillus cereus (strain ATCC 14579 / DSM 31 / CCUG 7414 / JCM 2152 / NBRC 15305 / NCIMB 9373 / NCTC 2599 / NRRL B-3711)).